Here is a 40-residue protein sequence, read N- to C-terminus: Photosystem II reaction center protein J (40 aa).

A helical transmembrane segment spans residues 8–28 (IPLWLIGTVAGIAVIGLVGVF).

Belongs to the PsbJ family. PSII is composed of 1 copy each of membrane proteins PsbA, PsbB, PsbC, PsbD, PsbE, PsbF, PsbH, PsbI, PsbJ, PsbK, PsbL, PsbM, PsbT, PsbX, PsbY, PsbZ, Psb30/Ycf12, at least 3 peripheral proteins of the oxygen-evolving complex and a large number of cofactors. It forms dimeric complexes.

The protein resides in the plastid. Its subcellular location is the chloroplast thylakoid membrane. One of the components of the core complex of photosystem II (PSII). PSII is a light-driven water:plastoquinone oxidoreductase that uses light energy to abstract electrons from H(2)O, generating O(2) and a proton gradient subsequently used for ATP formation. It consists of a core antenna complex that captures photons, and an electron transfer chain that converts photonic excitation into a charge separation. This chain is Photosystem II reaction center protein J, found in Secale cereale (Rye).